Reading from the N-terminus, the 372-residue chain is Innexin-16 (372 aa).

4 helical membrane passes run valine 31–glycine 51, valine 106–isoleucine 126, leucine 181–phenylalanine 201, and isoleucine 263–valine 283. Asparagine 352 carries an N-linked (GlcNAc...) asparagine glycan.

Belongs to the pannexin family.

The protein resides in the cell membrane. It is found in the cell junction. Its subcellular location is the gap junction. Its function is as follows. Structural component of the gap junctions. Required for signals downstream of defecation clock. The chain is Innexin-16 (inx-16) from Caenorhabditis elegans.